The primary structure comprises 316 residues: Pantothenate kinase (316 aa).

Residue glycine 95–serine 102 participates in ATP binding.

This sequence belongs to the prokaryotic pantothenate kinase family.

It is found in the cytoplasm. The enzyme catalyses (R)-pantothenate + ATP = (R)-4'-phosphopantothenate + ADP + H(+). The protein operates within cofactor biosynthesis; coenzyme A biosynthesis; CoA from (R)-pantothenate: step 1/5. The sequence is that of Pantothenate kinase from Haemophilus ducreyi (strain 35000HP / ATCC 700724).